The sequence spans 535 residues: CTP synthase (535 aa).

Positions 1 to 268 (MSTKYIFVTG…DQIVCDHLKL (268 aa)) are amidoligase domain. Ser14 provides a ligand contact to CTP. Ser14 contacts UTP. Position 15 to 20 (15 to 20 (SMGKGI)) interacts with ATP. L-glutamine is bound at residue Tyr55. Asp72 lines the ATP pocket. Asp72 and Glu142 together coordinate Mg(2+). CTP-binding positions include 149–151 (DME), 189–194 (KTKIAQ), and Lys225. UTP is bound by residues 189–194 (KTKIAQ) and Lys225. Val243 lines the ATP pocket. Residues 293–535 (KIALVGKYVE…FIRVAVENSK (243 aa)) enclose the Glutamine amidotransferase type-1 domain. Gly355 lines the L-glutamine pocket. Cys382 (nucleophile; for glutamine hydrolysis) is an active-site residue. Residues 383–386 (LGMQ), Glu406, and Arg464 each bind L-glutamine. Residues His509 and Glu511 contribute to the active site.

This sequence belongs to the CTP synthase family. As to quaternary structure, homotetramer. In contrast to E.coli CTP synthase, remains a tetramer at dilute enzyme concentrations even in the absence of Mg(2+), ATP and UTP.

It carries out the reaction UTP + L-glutamine + ATP + H2O = CTP + L-glutamate + ADP + phosphate + 2 H(+). It catalyses the reaction L-glutamine + H2O = L-glutamate + NH4(+). The enzyme catalyses UTP + NH4(+) + ATP = CTP + ADP + phosphate + 2 H(+). Its pathway is pyrimidine metabolism; CTP biosynthesis via de novo pathway; CTP from UDP: step 2/2. Allosterically activated by GTP, when glutamine is the substrate. GTP has no effect on the reaction when ammonia is the substrate. The allosteric effector GTP functions by stabilizing the protein conformation that binds the tetrahedral intermediate(s) formed during glutamine hydrolysis. Also activated by magnesium. Allosterically inhibited by CTP. Functionally, catalyzes the ATP-dependent amination of UTP to CTP with either L-glutamine or ammonia as the source of nitrogen. Is essential for the synthesis of CTP de novo. Contrary to other bacterial CTP synthases, the lactococcal enzyme is also able to convert dUTP to dCTP, but this reaction may not play a significant physiological role. Regulates intracellular CTP levels through interactions with the four ribonucleotide triphosphates. This Lactococcus lactis subsp. cremoris (strain MG1363) protein is CTP synthase.